The following is a 372-amino-acid chain: MSTAALLTLVRSGGNQVRRRVLLRARGLQDDRWVMPTCHSSTSEPKWSRFDPDGSGRPATWDNFGIWDNRLEEPILLPPSIKYGKPIPKVSLQNVGSASQIGKRKENEDRFGFAQLTNEVLYFAVYDGHGGPAAADFCHTHMEKCILDLLPKEENLETVLTLAFLEIDKTFARHAHLSADATLLTSGTTATVALLRDGIELVIASVGDSRAILCRKGKPMKLTIDHTPERKDEKERIKKCGGFVAWNSLGQPHVNGRLAMTRSLGDLDLKTSGVIAEPETKRIKLHHADDSFLVLTTDGINFMVNSQEICDFVNQCHDPNEAAHAVTEQAIQYGTEDNTTAVVVPFGAWGKYKNSEITFSFSRSFASSGRWA.

Residues 1–29 constitute a mitochondrion transit peptide; the sequence is MSTAALLTLVRSGGNQVRRRVLLRARGLQ. The tract at residues 46-61 is critical for association with the BCKDH complex; it reads KWSRFDPDGSGRPATW. The region spanning 94 to 346 is the PPM-type phosphatase domain; sequence NVGSASQIGK…DNTTAVVVPF (253 aa). Asp127 and Gly128 together coordinate Mn(2+). Ser248 bears the Phosphoserine mark. Mn(2+) is bound by residues Asp298 and Asp337.

This sequence belongs to the PP2C family. In terms of assembly, monomer. Interacts with E1 and E2 components of the branched-chain alpha-ketoacid dehydrogenase (BCKDH) complex; this interaction requires colocalization in mitochondria. Interacts with BCKDHA but not with BCKDHB of the E1 component. Interacts with the 24-meric E2 core composed of DBT monomers with a 24:1 stoichiometry; the N-terminal region (residues 49-61) of PPM1K and C-terminal linker of the lipoyl domain of DBT (residues 145-160) are critical for this interaction, whereas the lipoyl prosthetic group is dispensable. Competes with BCKDK for binding to the E2 core; this interaction is modulated by branched-chain alpha-keto acids. At steady state, BCKDH holoenzyme preferentially binds BCKDK and BCKDHA is phosphorylated. In response to high levels of branched-chain alpha-keto acids, the inhibitory BCKDK is replaced by activating PPM1K leading to BCKDHA dephosphorylation and BCAA degradation. The cofactor is Mn(2+).

It localises to the mitochondrion matrix. The enzyme catalyses O-phospho-L-seryl-[3-methyl-2-oxobutanoate dehydrogenase] + H2O = L-seryl-[3-methyl-2-oxobutanoate dehydrogenase] + phosphate. The catalysed reaction is O-phospho-L-seryl-[protein] + H2O = L-seryl-[protein] + phosphate. It participates in protein modification. Functionally, serine/threonine-protein phosphatase component of macronutrients metabolism. Forms a functional kinase and phosphatase pair with BCKDK, serving as a metabolic regulatory node that coordinates branched-chain amino acids (BCAAs) with glucose and lipid metabolism via two distinct phosphoprotein targets: mitochondrial BCKDHA subunit of the branched-chain alpha-ketoacid dehydrogenase (BCKDH) complex and cytosolic ACLY, a lipogenic enzyme of Krebs cycle. At high levels of branched-chain ketoacids, dephosphorylates and activates mitochondrial BCKDH complex, a multisubunit complex consisting of three multimeric components each involved in different steps of BCAA catabolism: E1 composed of BCKDHA and BCKDHB, E2 core composed of DBT monomers, and E3 composed of DLD monomers. Tightly associates with the E2 component of BCKDH complex and dephosphorylates BCKDHA on Ser-347. Regulates the reversible phosphorylation of ACLY in response to changes in cellular carbohydrate abundance such as occurs during fasting to feeding metabolic transition. At fasting state, appears to dephosphorylate ACLY on Ser-455 and inactivate it. Refeeding stimulates MLXIPL/ChREBP transcription factor, leading to increased BCKDK to PPM1K expression ratio, phosphorylation and activation of ACLY that ultimately results in the generation of malonyl-CoA and oxaloacetate immediate substrates of de novo lipogenesis and gluconeogenesis, respectively. Recognizes phosphosites having SxS or RxxS motifs and strictly depends on Mn(2+) ions for the phosphatase activity. Regulates Ca(2+)-induced opening of mitochondrial transition pore and apoptotic cell death. The sequence is that of Protein phosphatase Mn(2+)-dependent 1K (PPM1K) from Bos taurus (Bovine).